Reading from the N-terminus, the 493-residue chain is Probable mannosyl-oligosaccharide alpha-1,2-mannosidase 1B (493 aa).

The N-terminal stretch at 1 to 18 (MHLPSLSVALALVSSSLA) is a signal peptide. Residues Asn87 and Asn174 are each glycosylated (N-linked (GlcNAc...) asparagine). Cys324 and Cys353 form a disulfide bridge. Glu367 acts as the Proton donor in catalysis. Asn489 carries N-linked (GlcNAc...) asparagine glycosylation.

The protein belongs to the glycosyl hydrolase 47 family. Monomer. The cofactor is Ca(2+). Mg(2+) serves as cofactor.

The protein localises to the cytoplasmic vesicle lumen. It catalyses the reaction N(4)-(alpha-D-Man-(1-&gt;2)-alpha-D-Man-(1-&gt;2)-alpha-D-Man-(1-&gt;3)-[alpha-D-Man-(1-&gt;2)-alpha-D-Man-(1-&gt;3)-[alpha-D-Man-(1-&gt;2)-alpha-D-Man-(1-&gt;6)]-alpha-D-Man-(1-&gt;6)]-beta-D-Man-(1-&gt;4)-beta-D-GlcNAc-(1-&gt;4)-beta-D-GlcNAc)-L-asparaginyl-[protein] (N-glucan mannose isomer 9A1,2,3B1,2,3) + 4 H2O = N(4)-(alpha-D-Man-(1-&gt;3)-[alpha-D-Man-(1-&gt;3)-[alpha-D-Man-(1-&gt;6)]-alpha-D-Man-(1-&gt;6)]-beta-D-Man-(1-&gt;4)-beta-D-GlcNAc-(1-&gt;4)-beta-D-GlcNAc)-L-asparaginyl-[protein] (N-glucan mannose isomer 5A1,2) + 4 beta-D-mannose. The catalysed reaction is N(4)-(alpha-D-Man-(1-&gt;2)-alpha-D-Man-(1-&gt;2)-alpha-D-Man-(1-&gt;3)-[alpha-D-Man-(1-&gt;3)-[alpha-D-Man-(1-&gt;2)-alpha-D-Man-(1-&gt;6)]-alpha-D-Man-(1-&gt;6)]-beta-D-Man-(1-&gt;4)-beta-D-GlcNAc-(1-&gt;4)-beta-D-GlcNAc)-L-asparaginyl-[protein] (N-glucan mannose isomer 8A1,2,3B1,3) + 3 H2O = N(4)-(alpha-D-Man-(1-&gt;3)-[alpha-D-Man-(1-&gt;3)-[alpha-D-Man-(1-&gt;6)]-alpha-D-Man-(1-&gt;6)]-beta-D-Man-(1-&gt;4)-beta-D-GlcNAc-(1-&gt;4)-beta-D-GlcNAc)-L-asparaginyl-[protein] (N-glucan mannose isomer 5A1,2) + 3 beta-D-mannose. Its pathway is protein modification; protein glycosylation. In terms of biological role, involved in the maturation of Asn-linked oligosaccharides. Progressively trims alpha-1,2-linked mannose residues from Man(9)GlcNAc(2) to produce Man(5)GlcNAc(2). The polypeptide is Probable mannosyl-oligosaccharide alpha-1,2-mannosidase 1B (mns1B) (Neosartorya fischeri (strain ATCC 1020 / DSM 3700 / CBS 544.65 / FGSC A1164 / JCM 1740 / NRRL 181 / WB 181) (Aspergillus fischerianus)).